Consider the following 251-residue polypeptide: 2,3-bisphosphoglycerate-dependent phosphoglycerate mutase (251 aa).

Substrate contacts are provided by residues 7-14 (RHGESEWN), 20-21 (TG), Arg-59, 86-89 (ERHY), Lys-97, 113-114 (RR), and 186-187 (GN). Residue His-8 is the Tele-phosphohistidine intermediate of the active site. Glu-86 serves as the catalytic Proton donor/acceptor.

This sequence belongs to the phosphoglycerate mutase family. BPG-dependent PGAM subfamily.

The catalysed reaction is (2R)-2-phosphoglycerate = (2R)-3-phosphoglycerate. The protein operates within carbohydrate degradation; glycolysis; pyruvate from D-glyceraldehyde 3-phosphate: step 3/5. In terms of biological role, catalyzes the interconversion of 2-phosphoglycerate and 3-phosphoglycerate. This Treponema pallidum (strain Nichols) protein is 2,3-bisphosphoglycerate-dependent phosphoglycerate mutase.